The chain runs to 658 residues: Putative endo-beta-N-acetylglucosaminidase (658 aa).

A signal peptide spans 1–23 (MKKVRFIFLALLFFLASPEGAMA). Cell wall-binding repeat units follow at residues 42 to 63 (ANEWVFDTHYQSWFYIKADANY), 65 to 84 (ENEWLKQGDDYFYLKSGGYM), 86 to 105 (KSEWVEDKGAFYYLDQDGKM), 124 to 145 (IEDWVYDSQYDAWFYIKADGQH), 147 to 166 (EKEWLQIKGKDYYFKSGGYL), 185 to 206 (QQGWLFDKQYQSWFYIKENGNY), 208 to 227 (DKEWIFENGHYYYLKSGGYM), 229 to 248 (ANEWIWDKESWFYLKFDGKM), 250 to 271 (EKEWVYDSHSQAWYYFKSGGYM), 273 to 292 (ANEWIWDKESWFYLKSDGKI), 294 to 315 (EKEWVYDSHSQAWYYFKSGGYM), 317 to 336 (ANEWIWDKESWFYLKSDGKI), and 338 to 359 (EKEWVYDSHSQAWYYFKSGGYM).

Belongs to the glycosyl hydrolase 73 family.

It is found in the secreted. The catalysed reaction is an N(4)-(oligosaccharide-(1-&gt;3)-[oligosaccharide-(1-&gt;6)]-beta-D-Man-(1-&gt;4)-beta-D-GlcNAc-(1-&gt;4)-alpha-D-GlcNAc)-L-asparaginyl-[protein] + H2O = an oligosaccharide-(1-&gt;3)-[oligosaccharide-(1-&gt;6)]-beta-D-Man-(1-&gt;4)-D-GlcNAc + N(4)-(N-acetyl-beta-D-glucosaminyl)-L-asparaginyl-[protein]. Plays an important role in cell wall degradation and cell separation. The protein is Putative endo-beta-N-acetylglucosaminidase (lytB) of Streptococcus pneumoniae serotype 4 (strain ATCC BAA-334 / TIGR4).